Reading from the N-terminus, the 318-residue chain is DNA-directed RNA polymerase subunit alpha (318 aa).

The tract at residues 1-227 (MTQFEIECLD…NLFSPLKTID (227 aa)) is alpha N-terminal domain (alpha-NTD). The tract at residues 241–318 (HINQILIEEL…KEKTTKIYNK (78 aa)) is alpha C-terminal domain (alpha-CTD).

It belongs to the RNA polymerase alpha chain family. In terms of assembly, in plastids the minimal PEP RNA polymerase catalytic core is composed of four subunits: alpha, beta, beta', and beta''. When a (nuclear-encoded) sigma factor is associated with the core the holoenzyme is formed, which can initiate transcription.

The protein localises to the plastid. Its subcellular location is the chloroplast. It catalyses the reaction RNA(n) + a ribonucleoside 5'-triphosphate = RNA(n+1) + diphosphate. Functionally, DNA-dependent RNA polymerase catalyzes the transcription of DNA into RNA using the four ribonucleoside triphosphates as substrates. This Guillardia theta (Cryptophyte) protein is DNA-directed RNA polymerase subunit alpha.